We begin with the raw amino-acid sequence, 109 residues long: Nucleoid-associated protein Sama_1311 (109 aa).

This sequence belongs to the YbaB/EbfC family. In terms of assembly, homodimer.

It is found in the cytoplasm. It localises to the nucleoid. Its function is as follows. Binds to DNA and alters its conformation. May be involved in regulation of gene expression, nucleoid organization and DNA protection. In Shewanella amazonensis (strain ATCC BAA-1098 / SB2B), this protein is Nucleoid-associated protein Sama_1311.